The primary structure comprises 567 residues: Dynein, 70 kDa intermediate chain, flagellar outer arm (567 aa).

WD repeat units follow at residues 214–254, 261–302, 360–399, and 404–444; these read VPTS…GPVE, SHRD…ECVE, GHHG…KTPI, and YHPT…NEPT.

The protein belongs to the dynein intermediate chain family. Consists of at least 3 heavy chains (alpha, beta and gamma), 2 intermediate chains and 8 light chains.

It is found in the cytoplasm. Its subcellular location is the cytoskeleton. It localises to the flagellum axoneme. May play a role in regulating dynein heavy chain (DHC) activity. May function in holding IC78 to the DHC, or in stabilizing the entire dynein complex. The sequence is that of Dynein, 70 kDa intermediate chain, flagellar outer arm (ODA6) from Chlamydomonas reinhardtii (Chlamydomonas smithii).